Here is a 149-residue protein sequence, read N- to C-terminus: Protein FAM72A (149 aa).

It belongs to the FAM72 family. In terms of assembly, interacts with UNG. As to expression, expressed at high levels in stomach and also in kidney and, at low levels, in heart (at protein level). In the stomach, highly expressed in foveolar cells, parietal cells and chief cells (at protein level). In kidney, expressed in endothelial cells, mesangial and epithelial cells (parietal and visceral epithelium) around glomerulus (at protein level).

It is found in the cytoplasm. The protein localises to the mitochondrion. In terms of biological role, may play a role in the regulation of cellular reactive oxygen species metabolism. May participate in cell growth regulation. The sequence is that of Protein FAM72A (Fam72a) from Rattus norvegicus (Rat).